The sequence spans 178 residues: Large ribosomal subunit protein uL5 (178 aa).

It belongs to the universal ribosomal protein uL5 family. As to quaternary structure, part of the 50S ribosomal subunit; part of the 5S rRNA/L5/L18/L25 subcomplex. Contacts the 5S rRNA and the P site tRNA. Forms a bridge to the 30S subunit in the 70S ribosome.

Its function is as follows. This is one of the proteins that bind and probably mediate the attachment of the 5S RNA into the large ribosomal subunit, where it forms part of the central protuberance. In the 70S ribosome it contacts protein S13 of the 30S subunit (bridge B1b), connecting the 2 subunits; this bridge is implicated in subunit movement. Contacts the P site tRNA; the 5S rRNA and some of its associated proteins might help stabilize positioning of ribosome-bound tRNAs. The polypeptide is Large ribosomal subunit protein uL5 (Wolbachia pipientis subsp. Culex pipiens (strain wPip)).